The chain runs to 132 residues: Small ribosomal subunit protein uS8 (132 aa).

This sequence belongs to the universal ribosomal protein uS8 family. In terms of assembly, part of the 30S ribosomal subunit. Contacts proteins S5 and S12.

Its function is as follows. One of the primary rRNA binding proteins, it binds directly to 16S rRNA central domain where it helps coordinate assembly of the platform of the 30S subunit. The protein is Small ribosomal subunit protein uS8 of Geobacillus kaustophilus (strain HTA426).